Here is a 323-residue protein sequence, read N- to C-terminus: Beta-ketoacyl-[acyl-carrier-protein] synthase III (323 aa).

Catalysis depends on residues C113 and H250. The ACP-binding stretch occupies residues Q251 to R255. The active site involves N280.

Belongs to the thiolase-like superfamily. FabH family. Homodimer.

It localises to the cytoplasm. The enzyme catalyses malonyl-[ACP] + acetyl-CoA + H(+) = 3-oxobutanoyl-[ACP] + CO2 + CoA. Its pathway is lipid metabolism; fatty acid biosynthesis. Its function is as follows. Catalyzes the condensation reaction of fatty acid synthesis by the addition to an acyl acceptor of two carbons from malonyl-ACP. Catalyzes the first condensation reaction which initiates fatty acid synthesis and may therefore play a role in governing the total rate of fatty acid production. Possesses both acetoacetyl-ACP synthase and acetyl transacylase activities. Its substrate specificity determines the biosynthesis of branched-chain and/or straight-chain of fatty acids. The chain is Beta-ketoacyl-[acyl-carrier-protein] synthase III from Brucella canis (strain ATCC 23365 / NCTC 10854 / RM-666).